A 334-amino-acid polypeptide reads, in one-letter code: MKKNQFLKESDVTAESVFFMKRRQVLKALGISAAALSLPHAAHADLLSWFKGNDRPPAPAGKPLEFSKPAAWQNNLPLTPVDKVSGYNNFYEFGLDKADPAANAGSLKTDPWTLKISGEVAKPLTLDHDDLTRRFPLEERIYRMRCVEAWSMVVPWIGFPLHKLLALAEPTSNAKYVAFETIYAPEQMPGQQDRFIGGGLKYPYVEGLRLDEAMHPLTLMTVGVYGKALPPQNGAPVRLIVPWKYGFKGIKSIVSIKLTRERPPTTWNLAAPDEYGFYANVNPHVDHPRWSQATERFIGSGGILDVQRQPTLLFNGYADQVASLYRGLDLRENF.

Residues 1 to 44 (MKKNQFLKESDVTAESVFFMKRRQVLKALGISAAALSLPHAAHA) constitute a signal peptide (tat-type signal). Residues N88, 91–92 (YE), C146, T181, N233, R238, and 249–251 (GIK) each bind Mo-molybdopterin.

Belongs to the MsrP family. As to quaternary structure, heterodimer of a catalytic subunit (MsrP) and a heme-binding subunit (MsrQ). Requires Mo-molybdopterin as cofactor. Post-translationally, predicted to be exported by the Tat system. The position of the signal peptide cleavage has not been experimentally proven.

It is found in the periplasm. The catalysed reaction is L-methionyl-[protein] + a quinone + H2O = L-methionyl-(S)-S-oxide-[protein] + a quinol. The enzyme catalyses L-methionyl-[protein] + a quinone + H2O = L-methionyl-(R)-S-oxide-[protein] + a quinol. Part of the MsrPQ system that repairs oxidized periplasmic proteins containing methionine sulfoxide residues (Met-O), using respiratory chain electrons. Thus protects these proteins from oxidative-stress damage caused by reactive species of oxygen and chlorine generated by the host defense mechanisms. MsrPQ is essential for the maintenance of envelope integrity under bleach stress, rescuing a wide series of structurally unrelated periplasmic proteins from methionine oxidation, including the primary periplasmic chaperone SurA and the lipoprotein Pal. The catalytic subunit MsrP is non-stereospecific, being able to reduce both (R-) and (S-) diastereoisomers of methionine sulfoxide. The sequence is that of Protein-methionine-sulfoxide reductase catalytic subunit MsrP from Shigella boydii serotype 18 (strain CDC 3083-94 / BS512).